The following is a 120-amino-acid chain: Large ribosomal subunit protein bL20 (120 aa).

It belongs to the bacterial ribosomal protein bL20 family.

Binds directly to 23S ribosomal RNA and is necessary for the in vitro assembly process of the 50S ribosomal subunit. It is not involved in the protein synthesizing functions of that subunit. The sequence is that of Large ribosomal subunit protein bL20 from Blochmanniella pennsylvanica (strain BPEN).